Here is a 156-residue protein sequence, read N- to C-terminus: MLKITIITLGNKMPDWVNSGVNEYAKRFHDGIQIKLIEIPLLRRNKSSDLARILEKESALTKDALPANARLIALDMLGKSFSSEELALKLTQLQQISSHLCFIIGGPEGLSNEILTLCDERWSLSKLTLPHPLVRIILLESLYRAWSIINNHPYHK.

S-adenosyl-L-methionine-binding positions include leucine 74, glycine 105, and 124 to 129 (LSKLTL).

Belongs to the RNA methyltransferase RlmH family. As to quaternary structure, homodimer.

The protein localises to the cytoplasm. The catalysed reaction is pseudouridine(1915) in 23S rRNA + S-adenosyl-L-methionine = N(3)-methylpseudouridine(1915) in 23S rRNA + S-adenosyl-L-homocysteine + H(+). Functionally, specifically methylates the pseudouridine at position 1915 (m3Psi1915) in 23S rRNA. The protein is Ribosomal RNA large subunit methyltransferase H of Legionella pneumophila (strain Lens).